A 120-amino-acid polypeptide reads, in one-letter code: Insoluble matrix shell protein 2 (120 aa).

Positions 1 to 20 (MHQSSLGVLVLFSLIYLCIS) are cleaved as a signal peptide.

In terms of tissue distribution, component of the acid-insoluble organic matrix of the calcified shell.

The protein resides in the secreted. This Ruditapes philippinarum (Japanese carpet shell) protein is Insoluble matrix shell protein 2.